Here is a 418-residue protein sequence, read N- to C-terminus: MKFAIESISKNSGRLGQLRIRDGGPEFKTPLLLQTTKGGSIPWLSADVFETHVSRKPQVLQFTLSTMEQMTEALTHWNSGGGRGLSDYVGLPGHLNILLLRDPCETTPSGGNDRDILPLFTRRGKESLSSERYMEIVASFKPDMYEGLCDADTNLESAKKRVQKSVDRTEKFMQYIYEHRGKVNSTLLAPIVGGYNTFARTQSIKHAREQPAGSYGGYIFEGFHANGLSATTLDTSKLLPIVEHCVKQLEEDKPKILPGAYTPLTVLELIQQGIDVFDTSYAYCASLNFKALSFSFVQDAVEHVPFLDITDEAIKEDFTPPLSNCNCLTCQKHTRAYLHHLYKTNELLGPILLMVHNLYHYMAFFEKIRESVAKDTLPQLTELVRNQNGKTQVDYSIAANTKVISKATMGKGFAAAAV.

Positions 325, 327, 330, and 356 each coordinate Zn(2+).

It belongs to the queuine tRNA-ribosyltransferase family. QTRT2 subfamily. Heterodimer of a catalytic subunit and an accessory subunit. It depends on Zn(2+) as a cofactor.

The protein localises to the cytoplasm. Non-catalytic subunit of the queuine tRNA-ribosyltransferase (TGT) that catalyzes the base-exchange of a guanine (G) residue with queuine (Q) at position 34 (anticodon wobble position) in tRNAs with GU(N) anticodons (tRNA-Asp, -Asn, -His and -Tyr), resulting in the hypermodified nucleoside queuosine (7-(((4,5-cis-dihydroxy-2-cyclopenten-1-yl)amino)methyl)-7-deazaguanosine). The chain is Queuine tRNA-ribosyltransferase accessory subunit 2 from Drosophila melanogaster (Fruit fly).